A 145-amino-acid polypeptide reads, in one-letter code: Hemoglobin subunit beta-A (145 aa).

Residues 1–145 (MLTAEEKAAV…VANALAHRYH (145 aa)) form the Globin domain. Heme b is bound by residues histidine 62 and histidine 91.

This sequence belongs to the globin family. In terms of assembly, heterotetramer of two alpha chains and two beta chains. Red blood cells.

Involved in oxygen transport from the lung to the various peripheral tissues. In Capra hircus (Goat), this protein is Hemoglobin subunit beta-A.